The chain runs to 78 residues: UPF0291 protein MCCL_0996 (78 aa).

This sequence belongs to the UPF0291 family.

Its subcellular location is the cytoplasm. This Macrococcus caseolyticus (strain JCSC5402) (Macrococcoides caseolyticum) protein is UPF0291 protein MCCL_0996.